The primary structure comprises 114 residues: RutC family protein YoaB (114 aa).

It belongs to the RutC family.

This is RutC family protein YoaB (yoaB) from Escherichia coli O6:H1 (strain CFT073 / ATCC 700928 / UPEC).